The sequence spans 310 residues: MNLRLTVLSGGTGTPKLLRGLRELEADFSVIVNTGEDDEILGLYVSPDVDTVLYTLAGIVNDETWYGIKDDGFRGHEFLERLGVDEPLRIGDADRALKQYRTYLMREKGLKLSEAVDEIRRRLGIKWKVYPMTDDRVTTIVETDEGDLHFREFWVERGGKPPVRGVRYEGAEEASPPPDAVDELLRADVVLIGPSNPVTSIGPILSISEIRHIVREKPVVMVSPFIGREPVSGPAGKLMRAVGFEPSVRGLVEYYREWGVEPDVLIMDERDDVELPEGLEVVRTDTLMRDEKDSVRLAREVLRIVEELVG.

The 7,8-didemethyl-8-hydroxy-5-deazariboflavin site is built by Asp-50 and Arg-89.

It belongs to the CofD family. As to quaternary structure, homodimer. Mg(2+) serves as cofactor.

It catalyses the reaction (2S)-lactyl-2-diphospho-5'-guanosine + 7,8-didemethyl-8-hydroxy-5-deazariboflavin = oxidized coenzyme F420-0 + GMP + H(+). It participates in cofactor biosynthesis; coenzyme F420 biosynthesis. Functionally, catalyzes the transfer of the 2-phospholactate moiety from (2S)-lactyl-2-diphospho-5'-guanosine to 7,8-didemethyl-8-hydroxy-5-deazariboflavin (FO) with the formation of oxidized coenzyme F420-0 and GMP. The chain is 2-phospho-L-lactate transferase from Methanopyrus kandleri (strain AV19 / DSM 6324 / JCM 9639 / NBRC 100938).